Here is a 478-residue protein sequence, read N- to C-terminus: Zinc metalloproteinase/disintegrin ussurin (478 aa).

The first 20 residues, 1–20, serve as a signal peptide directing secretion; sequence MIQVLLVTICLAAFPYQGSS. A propeptide spanning residues 21-190 is cleaved from the precursor; the sequence is IILESGNVND…KKASPLVVTT (170 aa). Positions 193-389 constitute a Peptidase M12B domain; the sequence is RYVELVVVAD…RNPQCILNKP (197 aa). Ca(2+)-binding residues include Glu-196 and Asp-280. Intrachain disulfides connect Cys-304–Cys-384, Cys-344–Cys-368, and Cys-346–Cys-351. Residue His-329 participates in Zn(2+) binding. The active site involves Glu-330. The Zn(2+) site is built by His-333 and His-339. Positions 384 and 387 each coordinate Ca(2+). Positions 390 to 413 are excised as a propeptide; that stretch reads LRTDIVSTPVSGNELLEAGEECDC. One can recognise a Disintegrin domain in the interval 397 to 478; the sequence is TPVSGNELLE…AGCPRNPFHA (82 aa). Intrachain disulfides connect Cys-411–Cys-426, Cys-413–Cys-421, Cys-420–Cys-443, Cys-434–Cys-440, Cys-439–Cys-464, and Cys-452–Cys-471. Residues 456–458 carry the Cell attachment site motif; the sequence is RGD.

Belongs to the venom metalloproteinase (M12B) family. P-II subfamily. P-IIa sub-subfamily. In terms of assembly, monomer. Zn(2+) is required as a cofactor. Expressed by the venom gland.

It localises to the secreted. Impairs hemostasis in the envenomed animal. In terms of biological role, inhibits platelet aggregation induced by ADP, thrombin, platelet-activating factor and collagen. Acts by inhibiting fibrinogen interaction with platelet receptors GPIIb/GPIIIa (ITGA2B/ITGB3). This chain is Zinc metalloproteinase/disintegrin ussurin, found in Gloydius ussuriensis (Ussuri mamushi).